We begin with the raw amino-acid sequence, 119 residues long: Flagellar transcriptional regulator FlhD (119 aa).

Belongs to the FlhD family. In terms of assembly, homodimer; disulfide-linked. Forms a heterohexamer composed of two FlhC and four FlhD subunits. Each FlhC binds a FlhD dimer, forming a heterotrimer, and a hexamer assembles by dimerization of two heterotrimers.

The protein localises to the cytoplasm. Functionally, functions in complex with FlhC as a master transcriptional regulator that regulates transcription of several flagellar and non-flagellar operons by binding to their promoter region. Activates expression of class 2 flagellar genes, including fliA, which is a flagellum-specific sigma factor that turns on the class 3 genes. Also regulates genes whose products function in a variety of physiological pathways. This is Flagellar transcriptional regulator FlhD from Shigella boydii serotype 4 (strain Sb227).